A 391-amino-acid chain; its full sequence is MNAAPITQDLLTIPRKLPETAGRNLVGLTREQLHEALIQAGTPERQARMRVGQIWQWIYHWGVRDFAQMTNLAKDYRALLAENFEIALPEIVTRQISADGTRKYLLRISGGHEVETVYIPEENRGTLCISSQVGCTLTCSFCHTGTQKLVRNLTAGEIVGQVMVARDDLGEWPKPGAPKDETRLVSNVVLMGMGEPLYNFDNVRDAMKVVMDGEGISLSRRRITLSTSGIVPEIAKTAEEIGCLLAVSFHATTDETRDKLVPVNRKWNIETLLNALREYPRLSNSERITFEYVMLDGVNDSDEDARRLVRLIRGIPAKVNLIPFNEWPGSPYRRSGWERIEAFADIVHKAGYASPIRTPRGEDIMAACGQLKSATERGRKTAAQIAAEARA.

Glutamate 115 serves as the catalytic Proton acceptor. Residues 121–363 (EENRGTLCIS…SPIRTPRGED (243 aa)) form the Radical SAM core domain. The cysteines at positions 128 and 368 are disulfide-linked. The [4Fe-4S] cluster site is built by cysteine 135, cysteine 139, and cysteine 142. Residues 194–195 (GE), serine 226, 248–250 (SFH), and asparagine 325 contribute to the S-adenosyl-L-methionine site. Cysteine 368 acts as the S-methylcysteine intermediate in catalysis.

Belongs to the radical SAM superfamily. RlmN family. The cofactor is [4Fe-4S] cluster.

The protein resides in the cytoplasm. It carries out the reaction adenosine(2503) in 23S rRNA + 2 reduced [2Fe-2S]-[ferredoxin] + 2 S-adenosyl-L-methionine = 2-methyladenosine(2503) in 23S rRNA + 5'-deoxyadenosine + L-methionine + 2 oxidized [2Fe-2S]-[ferredoxin] + S-adenosyl-L-homocysteine. The catalysed reaction is adenosine(37) in tRNA + 2 reduced [2Fe-2S]-[ferredoxin] + 2 S-adenosyl-L-methionine = 2-methyladenosine(37) in tRNA + 5'-deoxyadenosine + L-methionine + 2 oxidized [2Fe-2S]-[ferredoxin] + S-adenosyl-L-homocysteine. Its function is as follows. Specifically methylates position 2 of adenine 2503 in 23S rRNA and position 2 of adenine 37 in tRNAs. m2A2503 modification seems to play a crucial role in the proofreading step occurring at the peptidyl transferase center and thus would serve to optimize ribosomal fidelity. The chain is Dual-specificity RNA methyltransferase RlmN from Paracoccus denitrificans (strain Pd 1222).